We begin with the raw amino-acid sequence, 336 residues long: GTPase Obg (336 aa).

An Obg domain is found at 1–159 (MKFLDETKVY…KTIWLRLKLI (159 aa)). In terms of domain architecture, OBG-type G spans 160 to 327 (ADAGLVGLPN…ALRALRSVIA (168 aa)). GTP-binding positions include 166-173 (GLPNAGKS), 191-195 (FTTLH), 212-215 (DIPG), 279-282 (SQID), and 308-310 (SAV). Positions 173 and 193 each coordinate Mg(2+).

Belongs to the TRAFAC class OBG-HflX-like GTPase superfamily. OBG GTPase family. Monomer. Requires Mg(2+) as cofactor.

It is found in the cytoplasm. Functionally, an essential GTPase which binds GTP, GDP and possibly (p)ppGpp with moderate affinity, with high nucleotide exchange rates and a fairly low GTP hydrolysis rate. Plays a role in control of the cell cycle, stress response, ribosome biogenesis and in those bacteria that undergo differentiation, in morphogenesis control. The protein is GTPase Obg of Rhizobium meliloti (strain 1021) (Ensifer meliloti).